Here is a 176-residue protein sequence, read N- to C-terminus: ATP-dependent protease subunit HslV (176 aa).

Thr2 is a catalytic residue. Residues Gly157, Cys160, and Thr163 each coordinate Na(+).

The protein belongs to the peptidase T1B family. HslV subfamily. As to quaternary structure, a double ring-shaped homohexamer of HslV is capped on each side by a ring-shaped HslU homohexamer. The assembly of the HslU/HslV complex is dependent on binding of ATP.

The protein resides in the cytoplasm. The catalysed reaction is ATP-dependent cleavage of peptide bonds with broad specificity.. Its activity is regulated as follows. Allosterically activated by HslU binding. Its function is as follows. Protease subunit of a proteasome-like degradation complex believed to be a general protein degrading machinery. This chain is ATP-dependent protease subunit HslV, found in Klebsiella pneumoniae (strain 342).